Consider the following 576-residue polypeptide: Dihydroxy-acid dehydratase (576 aa).

Residue cysteine 56 participates in [2Fe-2S] cluster binding. Residue aspartate 88 coordinates Mg(2+). Residue cysteine 129 coordinates [2Fe-2S] cluster. Residues aspartate 130 and lysine 131 each contribute to the Mg(2+) site. Lysine 131 carries the post-translational modification N6-carboxylysine. Cysteine 201 is a [2Fe-2S] cluster binding site. Glutamate 453 provides a ligand contact to Mg(2+). Serine 479 (proton acceptor) is an active-site residue.

It belongs to the IlvD/Edd family. In terms of assembly, homodimer. The cofactor is [2Fe-2S] cluster. It depends on Mg(2+) as a cofactor.

It carries out the reaction (2R)-2,3-dihydroxy-3-methylbutanoate = 3-methyl-2-oxobutanoate + H2O. It catalyses the reaction (2R,3R)-2,3-dihydroxy-3-methylpentanoate = (S)-3-methyl-2-oxopentanoate + H2O. It functions in the pathway amino-acid biosynthesis; L-isoleucine biosynthesis; L-isoleucine from 2-oxobutanoate: step 3/4. It participates in amino-acid biosynthesis; L-valine biosynthesis; L-valine from pyruvate: step 3/4. Its function is as follows. Functions in the biosynthesis of branched-chain amino acids. Catalyzes the dehydration of (2R,3R)-2,3-dihydroxy-3-methylpentanoate (2,3-dihydroxy-3-methylvalerate) into 2-oxo-3-methylpentanoate (2-oxo-3-methylvalerate) and of (2R)-2,3-dihydroxy-3-methylbutanoate (2,3-dihydroxyisovalerate) into 2-oxo-3-methylbutanoate (2-oxoisovalerate), the penultimate precursor to L-isoleucine and L-valine, respectively. This chain is Dihydroxy-acid dehydratase, found in Parvibaculum lavamentivorans (strain DS-1 / DSM 13023 / NCIMB 13966).